Here is a 331-residue protein sequence, read N- to C-terminus: L-lactate dehydrogenase A chain (331 aa).

NAD(+) contacts are provided by residues 29 to 57 (GMVG…MEDK) and Arg-98. 3 residues coordinate substrate: Arg-105, Asn-137, and Arg-168. Asn-137 contributes to the NAD(+) binding site. His-192 functions as the Proton acceptor in the catalytic mechanism. Substrate is bound at residue Thr-247.

This sequence belongs to the LDH/MDH superfamily. LDH family. As to quaternary structure, homotetramer.

Its subcellular location is the cytoplasm. The enzyme catalyses (S)-lactate + NAD(+) = pyruvate + NADH + H(+). Its pathway is fermentation; pyruvate fermentation to lactate; (S)-lactate from pyruvate: step 1/1. In terms of biological role, interconverts simultaneously and stereospecifically pyruvate and lactate with concomitant interconversion of NADH and NAD(+). This is L-lactate dehydrogenase A chain (ldha) from Parachaenichthys charcoti (Charcot's dragonfish).